The chain runs to 316 residues: Ornithine carbamoyltransferase (316 aa).

Residues 59–62 (STRT), glutamine 86, arginine 110, and 137–140 (HPCQ) each bind carbamoyl phosphate. L-ornithine contacts are provided by residues asparagine 168, aspartate 232, and 236 to 237 (SM). Residues 273 to 274 (CL) and arginine 301 each bind carbamoyl phosphate.

The protein belongs to the aspartate/ornithine carbamoyltransferase superfamily. OTCase family.

Its subcellular location is the cytoplasm. The catalysed reaction is carbamoyl phosphate + L-ornithine = L-citrulline + phosphate + H(+). It participates in amino-acid biosynthesis; L-arginine biosynthesis; L-arginine from L-ornithine and carbamoyl phosphate: step 1/3. Its function is as follows. Reversibly catalyzes the transfer of the carbamoyl group from carbamoyl phosphate (CP) to the N(epsilon) atom of ornithine (ORN) to produce L-citrulline. The sequence is that of Ornithine carbamoyltransferase from Listeria innocua serovar 6a (strain ATCC BAA-680 / CLIP 11262).